The sequence spans 393 residues: Formate-dependent phosphoribosylglycinamide formyltransferase (393 aa).

N(1)-(5-phospho-beta-D-ribosyl)glycinamide-binding positions include 22–23 and glutamate 82; that span reads EL. ATP is bound by residues arginine 114, lysine 155, 160–165, 195–198, and glutamate 203; these read SSGHGQ and EGFI. The ATP-grasp domain occupies 119–308; sequence RLAAEELGLK…QFALHARAIL (190 aa). Positions 267 and 279 each coordinate Mg(2+). Residues aspartate 286, lysine 356, and 363–364 contribute to the N(1)-(5-phospho-beta-D-ribosyl)glycinamide site; that span reads RR.

This sequence belongs to the PurK/PurT family. As to quaternary structure, homodimer.

It carries out the reaction N(1)-(5-phospho-beta-D-ribosyl)glycinamide + formate + ATP = N(2)-formyl-N(1)-(5-phospho-beta-D-ribosyl)glycinamide + ADP + phosphate + H(+). Its pathway is purine metabolism; IMP biosynthesis via de novo pathway; N(2)-formyl-N(1)-(5-phospho-D-ribosyl)glycinamide from N(1)-(5-phospho-D-ribosyl)glycinamide (formate route): step 1/1. Involved in the de novo purine biosynthesis. Catalyzes the transfer of formate to 5-phospho-ribosyl-glycinamide (GAR), producing 5-phospho-ribosyl-N-formylglycinamide (FGAR). Formate is provided by PurU via hydrolysis of 10-formyl-tetrahydrofolate. In Actinobacillus pleuropneumoniae serotype 3 (strain JL03), this protein is Formate-dependent phosphoribosylglycinamide formyltransferase.